Reading from the N-terminus, the 134-residue chain is Small ribosomal subunit protein eS24A (134 aa).

At S2 the chain carries N-acetylserine. The disordered stretch occupies residues 100–134; that stretch reads IQKVARQQRKQRKNRGKKVFGTGKRLAKRKSKQQD. 2 stretches are compositionally biased toward basic residues: residues 105–117 and 124–134; these read RQQR…RGKK and RLAKRKSKQQD.

Belongs to the eukaryotic ribosomal protein eS24 family. As to quaternary structure, component of the small ribosomal subunit (SSU). Mature yeast ribosomes consist of a small (40S) and a large (60S) subunit. The 40S small subunit contains 1 molecule of ribosomal RNA (18S rRNA) and at least 33 different proteins. The large 60S subunit contains 3 rRNA molecules (25S, 5.8S and 5S rRNA) and at least 46 different proteins.

Its subcellular location is the cytoplasm. In terms of biological role, component of the ribosome, a large ribonucleoprotein complex responsible for the synthesis of proteins in the cell. The small ribosomal subunit (SSU) binds messenger RNAs (mRNAs) and translates the encoded message by selecting cognate aminoacyl-transfer RNA (tRNA) molecules. The large subunit (LSU) contains the ribosomal catalytic site termed the peptidyl transferase center (PTC), which catalyzes the formation of peptide bonds, thereby polymerizing the amino acids delivered by tRNAs into a polypeptide chain. The nascent polypeptides leave the ribosome through a tunnel in the LSU and interact with protein factors that function in enzymatic processing, targeting, and the membrane insertion of nascent chains at the exit of the ribosomal tunnel. This is Small ribosomal subunit protein eS24A (rps2401) from Schizosaccharomyces pombe (strain 972 / ATCC 24843) (Fission yeast).